Reading from the N-terminus, the 129-residue chain is Small ribosomal subunit protein uS11 (129 aa).

The protein belongs to the universal ribosomal protein uS11 family. In terms of assembly, part of the 30S ribosomal subunit. Interacts with proteins S7 and S18. Binds to IF-3.

In terms of biological role, located on the platform of the 30S subunit, it bridges several disparate RNA helices of the 16S rRNA. Forms part of the Shine-Dalgarno cleft in the 70S ribosome. In Vibrio atlanticus (strain LGP32) (Vibrio splendidus (strain Mel32)), this protein is Small ribosomal subunit protein uS11.